The primary structure comprises 145 residues: D-aminoacyl-tRNA deacylase (145 aa).

A Gly-cisPro motif, important for rejection of L-amino acids motif is present at residues 137–138 (GP).

It belongs to the DTD family. Homodimer.

Its subcellular location is the cytoplasm. It carries out the reaction glycyl-tRNA(Ala) + H2O = tRNA(Ala) + glycine + H(+). It catalyses the reaction a D-aminoacyl-tRNA + H2O = a tRNA + a D-alpha-amino acid + H(+). Its function is as follows. An aminoacyl-tRNA editing enzyme that deacylates mischarged D-aminoacyl-tRNAs. Also deacylates mischarged glycyl-tRNA(Ala), protecting cells against glycine mischarging by AlaRS. Acts via tRNA-based rather than protein-based catalysis; rejects L-amino acids rather than detecting D-amino acids in the active site. By recycling D-aminoacyl-tRNA to D-amino acids and free tRNA molecules, this enzyme counteracts the toxicity associated with the formation of D-aminoacyl-tRNA entities in vivo and helps enforce protein L-homochirality. The sequence is that of D-aminoacyl-tRNA deacylase from Erwinia tasmaniensis (strain DSM 17950 / CFBP 7177 / CIP 109463 / NCPPB 4357 / Et1/99).